Consider the following 1302-residue polypeptide: Vascular endothelial growth factor receptor kdr-like (1302 aa).

A signal peptide spans 1 to 28; that stretch reads MTPLKTSVKAFFTLHVLFSCISHGLVEG. Residues 29-740 lie on the Extracellular side of the membrane; that stretch reads SRLPDPQLLP…GEDGKPNIEV (712 aa). 7 consecutive Ig-like C2-type domains span residues 34-115, 143-206, 222-318, 326-412, 419-542, 545-636, and 643-728; these read PQLL…HEVS, DPYF…VDNA, KNLA…TKVI, NVTH…ISYK, PKIF…FYVD, PQPF…SALT, and PWLM…AVIT. 2 disulfides stabilise this stretch: C55/C104 and C150/C199. Residues N69 and N97 are each glycosylated (N-linked (GlcNAc...) asparagine). 17 N-linked (GlcNAc...) asparagine glycosylation sites follow: N242, N265, N291, N326, N370, N380, N408, N453, N466, N505, N517, N532, N607, N611, N630, N648, and N655. Cysteines 243 and 302 form a disulfide. A disulfide bond links C444 and C524. C565 and C618 form a disulfide bridge. An intrachain disulfide couples C664 to C712. A helical transmembrane segment spans residues 741-761; it reads IILVSTGAAATFLWIMLILFI. At 762–1302 the chain is on the cytoplasmic side; sequence RKLRKPSSAD…YVVRYSTPPV (541 aa). A Protein kinase domain is found at 809-1139; sequence LRLGKTLGHG…ELVERLGDLL (331 aa). Residues 815 to 823 and K843 contribute to the ATP site; that span reads LGHGAFGKV. D1003 acts as the Proton acceptor in catalysis. Phosphotyrosine; by autocatalysis is present on residues Y1029, Y1034, and Y1150. 2 disordered regions span residues 1159 to 1179 and 1266 to 1292; these read TKAD…PVSL and PLVP…PDYN. Residues 1162–1176 show a composition bias toward polar residues; the sequence is DPSNQSPTEETSTRP.

This sequence belongs to the protein kinase superfamily. Tyr protein kinase family. CSF-1/PDGF receptor subfamily. Interacts with isoform VEGF165 of vegfaa and isoform VEGF171 of vegfab. Post-translationally, phosphorylated and activated by vegfaa and vegfab. In terms of tissue distribution, first expressed in embryos between 5- and 7-somites. At 7 somites, expressed in discrete bilateral stripes both anteriorly and posteriorly, and in a transverse ectodermal stripe in the hindbrain. From 7-somites, expression seems to extend caudally from the head, and in both directions in the trunk region, until by 20-somites, expression is detected as a continuous band from the anterior head region to the tailbud. Concurrently, cells expressing kdrl in the mid- and posterior trunk regions converge medially. By 24 hours post-fertilization (hpf), expressed in all the endothelial cells lining the vasculature.

It is found in the cell membrane. The enzyme catalyses L-tyrosyl-[protein] + ATP = O-phospho-L-tyrosyl-[protein] + ADP + H(+). Its function is as follows. Receptor for VEGF or VEGFC. Has a tyrosine-protein kinase activity. Combinations of multiple VEGF receptors are required for development of different blood vessel types in the embryo. Involved in angiogenesis, specifically in VEGF-induced sprouting of new blood vessels. Particularly involved in artery formation. Does not appear to be required for hematopoiesis. The chain is Vascular endothelial growth factor receptor kdr-like (kdrl) from Danio rerio (Zebrafish).